A 259-amino-acid chain; its full sequence is Adenylate kinase (259 aa).

52–57 is a binding site for ATP; sequence GAGKGT. The segment at 72 to 101 is NMP; the sequence is ATGDMLRSQVAKKTDLGREAKKIMDQGGLV. AMP-binding positions include Thr-73, Arg-78, 99 to 101, 128 to 131, and Gln-135; these read GLV and GFPR. An LID region spans residues 169 to 206; it reads GRLVHPASGRSYHKIFNPPKEAMKDDITGEPLVQRSDD. Residues Arg-170 and 179–180 each bind ATP; that span reads SY. 2 residues coordinate AMP: Arg-203 and Arg-214. Gln-242 contacts ATP.

It belongs to the adenylate kinase family. AK2 subfamily. As to quaternary structure, monomer.

The protein resides in the cytoplasm. Its subcellular location is the mitochondrion intermembrane space. It carries out the reaction AMP + ATP = 2 ADP. Functionally, catalyzes the reversible transfer of the terminal phosphate group between ATP and AMP. Plays an important role in cellular energy homeostasis and in adenine nucleotide metabolism. Adenylate kinase activity is critical for regulation of the phosphate utilization and the AMP de novo biosynthesis pathways. The chain is Adenylate kinase (adk1) from Emericella nidulans (strain FGSC A4 / ATCC 38163 / CBS 112.46 / NRRL 194 / M139) (Aspergillus nidulans).